Consider the following 303-residue polypeptide: Elongation factor Ts (303 aa).

The segment at 81–84 (TDFV) is involved in Mg(2+) ion dislocation from EF-Tu.

Belongs to the EF-Ts family.

It is found in the cytoplasm. Its function is as follows. Associates with the EF-Tu.GDP complex and induces the exchange of GDP to GTP. It remains bound to the aminoacyl-tRNA.EF-Tu.GTP complex up to the GTP hydrolysis stage on the ribosome. The sequence is that of Elongation factor Ts from Mesomycoplasma hyopneumoniae (strain J / ATCC 25934 / NCTC 10110) (Mycoplasma hyopneumoniae).